Here is a 250-residue protein sequence, read N- to C-terminus: Tetrathionate reductase subunit B (250 aa).

Positions 1 to 33 form a signal peptide, tat-type signal; sequence MWTGVNMDSSKRQFLQQLGVLTAGASLVPLAEA. 4Fe-4S ferredoxin-type domains follow at residues 50–79, 97–128, and 129–158; these read YAMLIDLRRCIGCQSCTVSCTIENQTPQGA, VTNVLLPRLCNHCDNPPCVPVCPVQATFQRED, and GIVVVDNKRCVGCAYCVQACPYDARFINHE. Positions 59, 62, 65, 69, 106, 109, 114, 118, 138, 141, 144, 148, 165, 168, 180, and 184 each coordinate [4Fe-4S] cluster.

As to quaternary structure, probably composed of three subunits: TtrA, TtrB and TtrC. In terms of processing, predicted to be exported by the Tat system. The position of the signal peptide cleavage has not been experimentally proven.

The protein localises to the periplasm. It is found in the cell inner membrane. Its function is as follows. Part of a membrane-bound tetrathionate reductase that catalyzes the reduction of tetrathionate to thiosulfate. TtrB is probably involved in transfer of electrons from TtrC to TtrA. During mice infection, the ability to use tetrathionate as an electron acceptor is a growth advantage for S.typhimurium over the competing microbiota in the lumen of the inflamed gut. In Salmonella typhimurium (strain LT2 / SGSC1412 / ATCC 700720), this protein is Tetrathionate reductase subunit B (ttrB).